The following is a 478-amino-acid chain: TFIIA-alpha and beta-like factor (478 aa).

The disordered stretch occupies residues 309-427; that stretch reads VKQPRNIEEP…SGDDVSEQDV (119 aa). Polar residues predominate over residues 390-401; sequence SISNEDSATNSS. Over residues 411–427 the composition is skewed to acidic residues; sequence VEEDPLNSGDDVSEQDV.

The protein belongs to the TFIIA subunit 1 family. Testis specific. Detected in adult testis mostly in round and elongating spermatids (at protein level). Detected in testis.

Its subcellular location is the nucleus. May function as a testis specific transcription factor. Binds DNA in conjunction with GTF2A2 and TBP (the TATA-binding protein) and together with GTF2A2, allows mRNA transcription. The protein is TFIIA-alpha and beta-like factor (GTF2A1L) of Homo sapiens (Human).